Here is a 240-residue protein sequence, read N- to C-terminus: Sugar fermentation stimulation protein homolog (240 aa).

This sequence belongs to the SfsA family.

The polypeptide is Sugar fermentation stimulation protein homolog (Natranaerobius thermophilus (strain ATCC BAA-1301 / DSM 18059 / JW/NM-WN-LF)).